The primary structure comprises 296 residues: 4-hydroxy-tetrahydrodipicolinate synthase (296 aa).

Thr49 is a binding site for pyruvate. The active-site Proton donor/acceptor is the Tyr137. Lys165 serves as the catalytic Schiff-base intermediate with substrate. Position 207 (Ile207) interacts with pyruvate.

The protein belongs to the DapA family. As to quaternary structure, homotetramer; dimer of dimers.

Its subcellular location is the cytoplasm. The enzyme catalyses L-aspartate 4-semialdehyde + pyruvate = (2S,4S)-4-hydroxy-2,3,4,5-tetrahydrodipicolinate + H2O + H(+). Its pathway is amino-acid biosynthesis; L-lysine biosynthesis via DAP pathway; (S)-tetrahydrodipicolinate from L-aspartate: step 3/4. Functionally, catalyzes the condensation of (S)-aspartate-beta-semialdehyde [(S)-ASA] and pyruvate to 4-hydroxy-tetrahydrodipicolinate (HTPA). The protein is 4-hydroxy-tetrahydrodipicolinate synthase of Afipia carboxidovorans (strain ATCC 49405 / DSM 1227 / KCTC 32145 / OM5) (Oligotropha carboxidovorans).